The sequence spans 148 residues: Low molecular weight protein-tyrosine-phosphatase Etp (148 aa).

The active-site Nucleophile is the cysteine 13. Arginine 19 is a catalytic residue. Aspartate 119 functions as the Proton donor in the catalytic mechanism.

The protein belongs to the low molecular weight phosphotyrosine protein phosphatase family.

The enzyme catalyses O-phospho-L-tyrosyl-[protein] + H2O = L-tyrosyl-[protein] + phosphate. Its function is as follows. Dephosphorylates etk. This chain is Low molecular weight protein-tyrosine-phosphatase Etp (etp), found in Escherichia coli O157:H7.